The following is a 336-amino-acid chain: Heat-inducible transcription repressor HrcA (336 aa).

This sequence belongs to the HrcA family.

In terms of biological role, negative regulator of class I heat shock genes (grpE-dnaK-dnaJ and groELS operons). Prevents heat-shock induction of these operons. This is Heat-inducible transcription repressor HrcA from Variovorax paradoxus (strain S110).